Reading from the N-terminus, the 174-residue chain is Type II restriction enzyme Bsp6I (174 aa).

The catalysed reaction is Endonucleolytic cleavage of DNA to give specific double-stranded fragments with terminal 5'-phosphates.. Functionally, a P subtype restriction enzyme that recognizes the double-stranded sequence 5'-GCNGC-3' and cleaves after C-2. The sequence is that of Type II restriction enzyme Bsp6I from Bacillus sp. (strain RFL6).